The following is a 291-amino-acid chain: Small ribosomal subunit protein uS2 (291 aa).

Residues 235 to 291 (NLQEDEESGDSGVDPYQDREEEITDYSNYTPKDEASGDDEDEEDNSLVNDEDLYDDK) form a disordered region. Over residues 270–291 (SGDDEDEEDNSLVNDEDLYDDK) the composition is skewed to acidic residues.

Belongs to the universal ribosomal protein uS2 family.

The polypeptide is Small ribosomal subunit protein uS2 (Treponema denticola (strain ATCC 35405 / DSM 14222 / CIP 103919 / JCM 8153 / KCTC 15104)).